A 96-amino-acid chain; its full sequence is Integration host factor subunit beta (96 aa).

Residues 59–78 (RVGRNPKTGETVSLPGKYVP) form a disordered region.

The protein belongs to the bacterial histone-like protein family. In terms of assembly, heterodimer of an alpha and a beta chain.

Its function is as follows. This protein is one of the two subunits of integration host factor, a specific DNA-binding protein that functions in genetic recombination as well as in transcriptional and translational control. This chain is Integration host factor subunit beta, found in Thioalkalivibrio sulfidiphilus (strain HL-EbGR7).